The chain runs to 386 residues: L-lactate dehydrogenase (386 aa).

One can recognise an FMN hydroxy acid dehydrogenase domain in the interval 1-380 (MIISASTDYR…TSDSLVQVTQ (380 aa)). Tyr-24 is a substrate binding site. Residues Ser-106 and Gln-127 each contribute to the FMN site. Tyr-129 contributes to the substrate binding site. Thr-155 is an FMN binding site. Arg-164 serves as a coordination point for substrate. Lys-251 serves as a coordination point for FMN. His-275 serves as the catalytic Proton acceptor. Arg-278 is a binding site for substrate. FMN is bound at residue 306 to 330 (DSGIRSGLDVVRMIALGADGVMLGR).

It belongs to the FMN-dependent alpha-hydroxy acid dehydrogenase family. It depends on FMN as a cofactor.

It is found in the cell inner membrane. The catalysed reaction is (S)-lactate + A = pyruvate + AH2. Functionally, catalyzes the conversion of L-lactate to pyruvate. Is coupled to the respiratory chain. The sequence is that of L-lactate dehydrogenase from Pectobacterium atrosepticum (strain SCRI 1043 / ATCC BAA-672) (Erwinia carotovora subsp. atroseptica).